Consider the following 239-residue polypeptide: Leucine rich adaptor protein 1 (239 aa).

LRR repeat units lie at residues 55-83 (LGDKIMALRMELAYLRAIDVKILQQLVTL) and 93-114 (LLEERGTLTSHCSSLTSSQYSL). Positions 107–118 (LTSSQYSLTGGS) are enriched in low complexity. The interval 107 to 140 (LTSSQYSLTGGSPERSRRGSWDSLPDTSSTDRLD) is disordered. Residues Ser-118, Ser-126, and Ser-129 each carry the phosphoserine modification.

As to quaternary structure, forms a tripartite complex with CDC42BPA/CDC42BPB and MYO18A acting as an adapter connecting both. Its binding to CDC42BPA/CDC42BPB results in their activation by abolition of their negative autoregulation. Interacts with CDC42BPA and CDC42BPB. Phosphorylated.

Its subcellular location is the cytoplasm. In terms of biological role, acts as an activator of the canonical NF-kappa-B pathway and drive the production of pro-inflammatory cytokines. Promotes the antigen (Ag)-presenting and priming function of dendritic cells via the canonical NF-kappa-B pathway. In concert with MYO18A and CDC42BPA/CDC42BPB, is involved in modulating lamellar actomyosin retrograde flow that is crucial to cell protrusion and migration. Activates CDC42BPA/CDC42BPB and targets it to actomyosin through its interaction with MYO18A, leading to MYL9/MLC2 phosphorylation and MYH9/MYH10-dependent actomyosin assembly in the lamella. In Rattus norvegicus (Rat), this protein is Leucine rich adaptor protein 1 (Lurap1).